The following is a 716-amino-acid chain: Fatty acid oxidation complex subunit alpha (716 aa).

The segment at 1–189 (MIYQSPTIQV…KVGAVDAVVA (189 aa)) is enoyl-CoA hydratase/isomerase. Asp296 contacts substrate. A 3-hydroxyacyl-CoA dehydrogenase region spans residues 311–716 (KEVKNAAVLG…ATNNGSYYQA (406 aa)). NAD(+) contacts are provided by residues Met324, Asp343, 400–402 (VVE), Lys407, and Ser429. His450 functions as the For 3-hydroxyacyl-CoA dehydrogenase activity in the catalytic mechanism. Asn453 is an NAD(+) binding site. Asn500 and Tyr660 together coordinate substrate.

In the N-terminal section; belongs to the enoyl-CoA hydratase/isomerase family. It in the C-terminal section; belongs to the 3-hydroxyacyl-CoA dehydrogenase family. Heterotetramer of two alpha chains (FadB) and two beta chains (FadA).

It catalyses the reaction a (3S)-3-hydroxyacyl-CoA + NAD(+) = a 3-oxoacyl-CoA + NADH + H(+). The catalysed reaction is a (3S)-3-hydroxyacyl-CoA = a (2E)-enoyl-CoA + H2O. The enzyme catalyses a 4-saturated-(3S)-3-hydroxyacyl-CoA = a (3E)-enoyl-CoA + H2O. It carries out the reaction (3S)-3-hydroxybutanoyl-CoA = (3R)-3-hydroxybutanoyl-CoA. It catalyses the reaction a (3Z)-enoyl-CoA = a 4-saturated (2E)-enoyl-CoA. The catalysed reaction is a (3E)-enoyl-CoA = a 4-saturated (2E)-enoyl-CoA. It participates in lipid metabolism; fatty acid beta-oxidation. Involved in the aerobic and anaerobic degradation of long-chain fatty acids via beta-oxidation cycle. Catalyzes the formation of 3-oxoacyl-CoA from enoyl-CoA via L-3-hydroxyacyl-CoA. It can also use D-3-hydroxyacyl-CoA and cis-3-enoyl-CoA as substrate. This is Fatty acid oxidation complex subunit alpha from Shewanella putrefaciens (strain CN-32 / ATCC BAA-453).